Here is a 436-residue protein sequence, read N- to C-terminus: Trigger factor (436 aa).

In terms of domain architecture, PPIase FKBP-type spans 161 to 246 (EDQLNIDFVG…VNTVSEPKLP (86 aa)).

Belongs to the FKBP-type PPIase family. Tig subfamily.

It is found in the cytoplasm. It carries out the reaction [protein]-peptidylproline (omega=180) = [protein]-peptidylproline (omega=0). Functionally, involved in protein export. Acts as a chaperone by maintaining the newly synthesized protein in an open conformation. Functions as a peptidyl-prolyl cis-trans isomerase. This chain is Trigger factor, found in Pseudomonas savastanoi pv. phaseolicola (strain 1448A / Race 6) (Pseudomonas syringae pv. phaseolicola (strain 1448A / Race 6)).